A 120-amino-acid chain; its full sequence is Large ribosomal subunit protein bL20 (120 aa).

This sequence belongs to the bacterial ribosomal protein bL20 family.

In terms of biological role, binds directly to 23S ribosomal RNA and is necessary for the in vitro assembly process of the 50S ribosomal subunit. It is not involved in the protein synthesizing functions of that subunit. In Baumannia cicadellinicola subsp. Homalodisca coagulata, this protein is Large ribosomal subunit protein bL20.